Reading from the N-terminus, the 633-residue chain is tRNA uridine 5-carboxymethylaminomethyl modification enzyme MnmG (633 aa).

Residues 15-20 (GAGHAG), I127, and S182 contribute to the FAD site. 276–290 (GPRYCPSIEDKIVRF) contacts NAD(+). Residue Q373 participates in FAD binding.

The protein belongs to the MnmG family. Homodimer. Heterotetramer of two MnmE and two MnmG subunits. Requires FAD as cofactor.

Its subcellular location is the cytoplasm. NAD-binding protein involved in the addition of a carboxymethylaminomethyl (cmnm) group at the wobble position (U34) of certain tRNAs, forming tRNA-cmnm(5)s(2)U34. The chain is tRNA uridine 5-carboxymethylaminomethyl modification enzyme MnmG from Streptococcus agalactiae serotype III (strain NEM316).